A 78-amino-acid polypeptide reads, in one-letter code: Mu-conotoxin BuIIIB (78 aa).

An N-terminal signal peptide occupies residues 1–22; sequence MMSKLGVLLTICLLLFPLFALP. A propeptide spanning residues 23–51 is cleaved from the precursor; sequence QDGDQPADRPAERMQDDISSEQNPLLEKR. A disordered region spans residues 26 to 46; that stretch reads DQPADRPAERMQDDISSEQNP. Residues 28–38 show a composition bias toward basic and acidic residues; that stretch reads PADRPAERMQD. 3 disulfides stabilise this stretch: Cys56–Cys68, Cys57–Cys74, and Cys64–Cys75. At Cys75 the chain carries Cysteine amide.

Belongs to the conotoxin M superfamily. Expressed by the venom duct.

The protein localises to the secreted. Mu-conotoxins block voltage-gated sodium channels (Nav). This synthetic toxin potently blocks rNav1.4/SCN4A (Kd=0.34-3.6 nM), rNav1.2/SCN2A (Kd=13 nM), rNav1.3/SCN3A (Kd=200 nM), rNav1.1/SCN1A (Kd=360 nM), mNav1.6/SCN8A (IC(50)=1.8 uM), rNav1.5/SCN5A (IC(50)=9 uM), rNav1.6/SCN8A (IC(50)&gt;30 uM). It is noteworthy that the toxin is 50-fold more potent on mouse Nav1.6 than on rat Nav1.6. The block of SCN4A is very slowly reversible. This chain is Mu-conotoxin BuIIIB, found in Conus bullatus (Bubble cone).